A 208-amino-acid chain; its full sequence is NAD(P)H-quinone oxidoreductase subunit I (208 aa).

4Fe-4S ferredoxin-type domains lie at 55–84 and 95–124; these read GRIH…VDWV and RNYS…MTEE. Cys-64, Cys-67, Cys-70, Cys-74, Cys-104, Cys-107, Cys-110, and Cys-114 together coordinate [4Fe-4S] cluster.

Belongs to the complex I 23 kDa subunit family. NDH-1 is composed of at least 11 different subunits. The cofactor is [4Fe-4S] cluster.

The protein resides in the cellular thylakoid membrane. The catalysed reaction is a plastoquinone + NADH + (n+1) H(+)(in) = a plastoquinol + NAD(+) + n H(+)(out). The enzyme catalyses a plastoquinone + NADPH + (n+1) H(+)(in) = a plastoquinol + NADP(+) + n H(+)(out). Functionally, NDH-1 shuttles electrons from an unknown electron donor, via FMN and iron-sulfur (Fe-S) centers, to quinones in the respiratory and/or the photosynthetic chain. The immediate electron acceptor for the enzyme in this species is believed to be plastoquinone. Couples the redox reaction to proton translocation, and thus conserves the redox energy in a proton gradient. The chain is NAD(P)H-quinone oxidoreductase subunit I from Prochlorococcus marinus (strain MIT 9312).